A 77-amino-acid polypeptide reads, in one-letter code: MTQKATILAIFMVVLVLGLETKETQGQEMCHDLIKKTDCDDATCVTLCKQKWNGNGGGSCFQIVNLKSCLCAFPCQV.

The first 26 residues, 1 to 26, serve as a signal peptide directing secretion; it reads MTQKATILAIFMVVLVLGLETKETQG. Intrachain disulfides connect C30–C75, C39–C60, C44–C69, and C48–C71.

It belongs to the DEFL family.

It localises to the secreted. This chain is Putative defensin-like protein 120 (LCR56), found in Arabidopsis thaliana (Mouse-ear cress).